Consider the following 343-residue polypeptide: L-threonine 3-dehydrogenase (343 aa).

C38 serves as a coordination point for Zn(2+). Catalysis depends on charge relay system residues T40 and H43. Positions 63, 64, 93, 96, 99, and 107 each coordinate Zn(2+). NAD(+) contacts are provided by residues I175, D195, R200, 262-264 (LGI), and 286-287 (IY).

The protein belongs to the zinc-containing alcohol dehydrogenase family. As to quaternary structure, homotetramer. It depends on Zn(2+) as a cofactor.

The protein resides in the cytoplasm. The enzyme catalyses L-threonine + NAD(+) = (2S)-2-amino-3-oxobutanoate + NADH + H(+). Its pathway is amino-acid degradation; L-threonine degradation via oxydo-reductase pathway; glycine from L-threonine: step 1/2. Catalyzes the NAD(+)-dependent oxidation of L-threonine to 2-amino-3-ketobutyrate. This Paraburkholderia xenovorans (strain LB400) protein is L-threonine 3-dehydrogenase.